The following is a 60-amino-acid chain: Large ribosomal subunit protein uL30 (60 aa).

This sequence belongs to the universal ribosomal protein uL30 family. As to quaternary structure, part of the 50S ribosomal subunit.

The protein is Large ribosomal subunit protein uL30 of Streptococcus gordonii (strain Challis / ATCC 35105 / BCRC 15272 / CH1 / DL1 / V288).